Consider the following 394-residue polypeptide: MKSKILMKYRSLLVRIYSIVFRIIGLLPRNEKLIIFESYSGKQFSCNPRAIFEYLEENKDKYDYQLIWSIDKRNKDLFDNSDVNYLRRFSLKWLWYMATAKYWVTNSRLPLWIPKPRNTTYVQTWHGTPLKKLANDMDEVHMPGTTTEQYKRNFLKEASKWDYLISPNAYSTEIFRSAFQFKKTFIESGYPRNDFLHKKNRNEEMLKIKERLGINKDKKIILYAPTWRDNSFYAKGKYKFNMVLDLESLKNQLCNEYILILRMHYLVSENINLTEYKEFAYDFSDHNDIRELYLISDILITDYSSVFFDFAGLKRPILFYVPDIEFYRDNLRGFYYDFEKCAPGPLLKTTEKVIEAIHKTKNYKQDENITSFYDQFCYLEKGDSSKKVVEELLG.

The protein belongs to the CDP-glycerol glycerophosphotransferase family.

It is found in the cell membrane. It carries out the reaction 4-O-[(2R)-glycerylphospho]-N-acetyl-beta-D-mannosaminyl-(1-&gt;4)-N-acetyl-alpha-D-glucosaminyl di-trans,octa-cis-undecaprenyl diphosphate + n CDP-glycerol = 4-O-{[(2R)-1-glycerylphospho](n)-(2R)-1-glycerylphospho}-N-acetyl-beta-D-mannosaminyl-(1-&gt;4)-N-acetyl-alpha-D-glucosaminyl undecaprenyl diphosphate + n CMP + n H(+). Its function is as follows. Catalyzes the addition of further 2-8 glycerol phosphate units from CDP-glycerol to the single glycerol phosphate unit bound to the prenolpyrophosphate-linked disaccharide. The function in the cell is unknown since the product is not part of the poly(ribitol phosphate) teichoic acid found in the cell walls. The sequence is that of Teichoic acid poly(glycerol phosphate) polymerase (tarF) from Bacillus spizizenii (strain ATCC 23059 / NRRL B-14472 / W23) (Bacillus subtilis subsp. spizizenii).